We begin with the raw amino-acid sequence, 239 residues long: uncharacterized protein (239 aa).

In terms of domain architecture, S4 RNA-binding spans 1 to 65 (MRLDKLLANS…DYREFIYLMM (65 aa)). The active-site Nucleophile is D103.

The protein belongs to the pseudouridine synthase RsuA family.

The catalysed reaction is a uridine in RNA = a pseudouridine in RNA. This is an uncharacterized protein from Bacillus subtilis (strain 168).